The primary structure comprises 345 residues: Dihydroorotate dehydrogenase (quinone) (345 aa).

FMN contacts are provided by residues 65 to 69 (AGLDK) and Thr89. Lys69 provides a ligand contact to substrate. 114 to 118 (NRLGF) serves as a coordination point for substrate. FMN-binding residues include Asn146 and Asn179. Asn179 serves as a coordination point for substrate. Ser182 (nucleophile) is an active-site residue. Asn184 is a binding site for substrate. Residues Lys224 and Thr252 each contribute to the FMN site. 253-254 (NT) provides a ligand contact to substrate. Residues Gly275, Gly304, and 325–326 (YT) contribute to the FMN site.

Belongs to the dihydroorotate dehydrogenase family. Type 2 subfamily. Monomer. FMN serves as cofactor.

The protein localises to the cell membrane. The enzyme catalyses (S)-dihydroorotate + a quinone = orotate + a quinol. It functions in the pathway pyrimidine metabolism; UMP biosynthesis via de novo pathway; orotate from (S)-dihydroorotate (quinone route): step 1/1. Its function is as follows. Catalyzes the conversion of dihydroorotate to orotate with quinone as electron acceptor. The protein is Dihydroorotate dehydrogenase (quinone) of Leptothrix cholodnii (strain ATCC 51168 / LMG 8142 / SP-6) (Leptothrix discophora (strain SP-6)).